Reading from the N-terminus, the 812-residue chain is INO80 complex subunit D (812 aa).

Disordered stretches follow at residues 521-573 and 581-600; these read NSRK…LCMP and EVSSIRSPSTPNLSTEELPD. Residues 524 to 558 show a composition bias toward basic residues; the sequence is KVQHHQQRKPRKKTKPPALTKKTKKKRRRGPRRPQ. The span at 585–595 shows a compositional bias: polar residues; sequence IRSPSTPNLST.

It belongs to the INO80D family. As to quaternary structure, component of the chromatin-remodeling INO80 complex.

It is found in the nucleus. Its function is as follows. Putative regulatory component of the chromatin remodeling INO80 complex which is involved in transcriptional regulation, DNA replication and probably DNA repair. In Xenopus laevis (African clawed frog), this protein is INO80 complex subunit D.